Consider the following 378-residue polypeptide: Galanin receptor 2b (378 aa).

Residues 1–30 lie on the Extracellular side of the membrane; the sequence is MSDHEDLNKAMGHWNASESYQLNPASVIVS. Residues 31 to 51 traverse the membrane as a helical segment; that stretch reads VVFSLIFLLGTIGNSLVLAVL. The Cytoplasmic segment spans residues 52 to 62; sequence LRSGQVGYNTT. Residues 63 to 83 form a helical membrane-spanning segment; the sequence is NLFILNLSVADFFFIIFCVPF. Residues 84 to 101 lie on the Extracellular side of the membrane; the sequence is QATIYSLEGWVFGSFMCK. A disulfide bridge connects residues Cys-100 and Cys-177. Residues 102–123 form a helical membrane-spanning segment; that stretch reads VVHFFINLTMYASSFTLAAVSV. At 124 to 143 the chain is on the cytoplasmic side; that stretch reads DRYLAIRYPLRSRELRTPCN. The chain crosses the membrane as a helical span at residues 144-164; sequence AVVAMVVIWGLSLVFAGPYLS. The Extracellular segment spans residues 165–187; it reads YYDLIDFENSNVCVPGWEEHNRK. A helical membrane pass occupies residues 188-208; sequence VLDTCTFVFGYVIPVLIVSLS. At 209 to 238 the chain is on the cytoplasmic side; sequence YTRTIKYLWTAVDPLDGMSESKRAKRKVTK. Residues 239 to 259 traverse the membrane as a helical segment; that stretch reads MIIIVTVLFCICWLPYHVVIL. Residues 260-276 lie on the Extracellular side of the membrane; the sequence is CYLYGDFPFNQTTYAFR. The chain crosses the membrane as a helical span at residues 277–297; it reads LLSHCMAYANSCLNPIVYALV. Over 298–378 the chain is Cytoplasmic; the sequence is SKHFRKGFKK…TITLPFQNQP (81 aa). Positions 339–362 are disordered; sequence EVSQMNEENARQNESEMVNRPLAQ.

It belongs to the G-protein coupled receptor 1 family. Expressed in neurons in the ventral area of the interpeduncular nucleus (IPN) where expression often overlaps with spx1.

It localises to the membrane. Functionally, receptor for the hormone galanin. Receptor for the hormones spexin-1 and spexin-2. This Danio rerio (Zebrafish) protein is Galanin receptor 2b.